A 613-amino-acid polypeptide reads, in one-letter code: Ribosome-associated molecular chaperone SSB1 (613 aa).

The tract at residues 1 to 391 (MAEGVFQGAI…ILTGQSTSED (391 aa)) is nucleotide binding domain (NBD). Residues 16–18 (TTY), K73, 205–207 (GGT), 271–278 (ERAKRTLS), and G342 contribute to the ATP site. The segment at 392 to 402 (TKDLLLLDVAP) is inter-domain linker. A substrate binding domain (SBD) region spans residues 403–613 (LSLGVGMQGD…RVVTKAMSSR (211 aa)). Residues 516–612 (SDEIEKMVNQ…KRVVTKAMSS (97 aa)) form a lid domain (SBDalpha) region. A Nuclear export signal motif is present at residues 574-582 (IESALSDAL).

This sequence belongs to the heat shock protein 70 family. Ssb-type Hsp70 subfamily. In terms of assembly, binds to ribosomes. Binds close to the ribosomal tunnel exit via contacts with both ribosomal proteins and rRNA. Directly interacts with nascent polypeptides. This interaction is dependent on the ribosome-associated complex (RAC). Interacts with SSE1. Interacts with FES1.

It localises to the cytoplasm. The catalysed reaction is ATP + H2O = ADP + phosphate + H(+). Its function is as follows. Ribosome-bound, Hsp70-type chaperone that assists in the cotranslational folding of newly synthesized proteins in the cytosol. Stimulates folding by interacting with nascent chains, binding to short, largely hydrophobic sequences exposed by unfolded proteins, thereby stabilizing longer, more slowly translated, and aggregation-prone nascent polypeptides and domains that cannot fold stably until fully synthesized. The Hsp70-protein substrate interaction depends on ATP-binding and on allosteric regulation between the NBD and the SBD. The ATP-bound state is characterized by a fast exchange rate of substrate (low affinity state), while in the ADP-bound state exchange is much slower (high affinity state). During the Hsp70 cycle, the chaperone switches between the ATP-bound state (open conformation) and the ADP-bound state (closed conformation) by major conformational rearrangements involving mainly the lid domain. Ssb cooperates with a specific Hsp40/Hsp70 co-chaperone termed the ribosome-associated complex (RAC), which stimulates the ATPase activity of the ribosome-associated pool of Ssbs and switches it to the high affinity substrate binding state. Hsp110 chaperone SSE1 and FES1 act as nucleotide exchange factors that cause substrate release. This Zygosaccharomyces rouxii (strain ATCC 2623 / CBS 732 / NBRC 1130 / NCYC 568 / NRRL Y-229) protein is Ribosome-associated molecular chaperone SSB1 (SSB1).